Reading from the N-terminus, the 229-residue chain is Cytidylate kinase (229 aa).

Position 10–18 (10–18 (GFSSCGKST)) interacts with ATP.

Belongs to the cytidylate kinase family. Type 1 subfamily.

The protein resides in the cytoplasm. It carries out the reaction CMP + ATP = CDP + ADP. It catalyses the reaction dCMP + ATP = dCDP + ADP. The protein is Cytidylate kinase of Bacteroides thetaiotaomicron (strain ATCC 29148 / DSM 2079 / JCM 5827 / CCUG 10774 / NCTC 10582 / VPI-5482 / E50).